Here is a 360-residue protein sequence, read N- to C-terminus: UPF0284 protein APE_2029.1 (360 aa).

Belongs to the UPF0284 family.

This is UPF0284 protein APE_2029.1 from Aeropyrum pernix (strain ATCC 700893 / DSM 11879 / JCM 9820 / NBRC 100138 / K1).